A 146-amino-acid chain; its full sequence is Large ribosomal subunit protein uL15 (146 aa).

Positions 1–56 are disordered; the sequence is MSDIQLNTLKPAEGSKHAKRRVGRGIGSGLGKTAGRGHKGQKSRSGGFHKVGFEGG. Residues 24–34 are compositionally biased toward gly residues; it reads RGIGSGLGKTA.

Belongs to the universal ribosomal protein uL15 family. As to quaternary structure, part of the 50S ribosomal subunit.

Binds to the 23S rRNA. The polypeptide is Large ribosomal subunit protein uL15 (Bordetella bronchiseptica (strain ATCC BAA-588 / NCTC 13252 / RB50) (Alcaligenes bronchisepticus)).